The primary structure comprises 310 residues: Ribosomal RNA small subunit methyltransferase H (310 aa).

S-adenosyl-L-methionine-binding positions include 32 to 34 (AGH), D52, F79, D100, and Q107.

The protein belongs to the methyltransferase superfamily. RsmH family.

The protein localises to the cytoplasm. The enzyme catalyses cytidine(1402) in 16S rRNA + S-adenosyl-L-methionine = N(4)-methylcytidine(1402) in 16S rRNA + S-adenosyl-L-homocysteine + H(+). In terms of biological role, specifically methylates the N4 position of cytidine in position 1402 (C1402) of 16S rRNA. In Halalkalibacterium halodurans (strain ATCC BAA-125 / DSM 18197 / FERM 7344 / JCM 9153 / C-125) (Bacillus halodurans), this protein is Ribosomal RNA small subunit methyltransferase H.